We begin with the raw amino-acid sequence, 168 residues long: Protein SprT (168 aa).

The SprT-like domain maps to 20–166 (EKLQQANKYL…RHCQAILQLI (147 aa)). Histidine 78 is a binding site for Zn(2+). The active site involves glutamate 79. Residue histidine 82 coordinates Zn(2+).

This sequence belongs to the SprT family. Requires Zn(2+) as cofactor.

The protein resides in the cytoplasm. This chain is Protein SprT, found in Proteus mirabilis (strain HI4320).